Here is a 275-residue protein sequence, read N- to C-terminus: 4-hydroxy-tetrahydrodipicolinate reductase (275 aa).

Residues Gly-13–Met-18, Gly-108–Thr-110, and Ala-134–Phe-137 contribute to the NAD(+) site. His-164 serves as the catalytic Proton donor/acceptor. His-165 provides a ligand contact to (S)-2,3,4,5-tetrahydrodipicolinate. The Proton donor role is filled by Lys-168. (S)-2,3,4,5-tetrahydrodipicolinate is bound at residue Gly-174–Thr-175.

Belongs to the DapB family.

The protein resides in the cytoplasm. The enzyme catalyses (S)-2,3,4,5-tetrahydrodipicolinate + NAD(+) + H2O = (2S,4S)-4-hydroxy-2,3,4,5-tetrahydrodipicolinate + NADH + H(+). It carries out the reaction (S)-2,3,4,5-tetrahydrodipicolinate + NADP(+) + H2O = (2S,4S)-4-hydroxy-2,3,4,5-tetrahydrodipicolinate + NADPH + H(+). It participates in amino-acid biosynthesis; L-lysine biosynthesis via DAP pathway; (S)-tetrahydrodipicolinate from L-aspartate: step 4/4. Its function is as follows. Catalyzes the conversion of 4-hydroxy-tetrahydrodipicolinate (HTPA) to tetrahydrodipicolinate. This is 4-hydroxy-tetrahydrodipicolinate reductase from Synechocystis sp. (strain ATCC 27184 / PCC 6803 / Kazusa).